Reading from the N-terminus, the 193-residue chain is Thymidine kinase (193 aa).

Residues 9-16 and 87-90 contribute to the ATP site; these read ASMNAGKS and DEAQ. The Proton acceptor role is filled by glutamate 88. 4 residues coordinate Zn(2+): cysteine 145, cysteine 147, cysteine 182, and histidine 185.

It belongs to the thymidine kinase family. Homotetramer.

It localises to the cytoplasm. The catalysed reaction is thymidine + ATP = dTMP + ADP + H(+). The protein is Thymidine kinase of Zymomonas mobilis subsp. mobilis (strain ATCC 31821 / ZM4 / CP4).